Consider the following 526-residue polypeptide: NAD(P)H-quinone oxidoreductase chain 4 2 (526 aa).

The next 14 helical transmembrane spans lie at 6–26 (FPWL…LPLI), 36–56 (WYAL…FYTG), 91–111 (LILL…PVSF), 113–133 (PKLF…VFAV), 137–157 (LLFF…LSIW), 169–189 (FILY…TMAF), 212–232 (LLLY…FPLH), 243–263 (TAPA…YALL), 275–295 (ALFG…AALT), 306–326 (IAYS…SFTD), 332–352 (AMLQ…MVGA), 375–397 (IFAM…GFVA), 417–437 (VIIV…LLSM), and 464–484 (VFVI…PKAV).

This sequence belongs to the complex I subunit 4 family.

Its subcellular location is the cellular thylakoid membrane. It catalyses the reaction a plastoquinone + NADH + (n+1) H(+)(in) = a plastoquinol + NAD(+) + n H(+)(out). The enzyme catalyses a plastoquinone + NADPH + (n+1) H(+)(in) = a plastoquinol + NADP(+) + n H(+)(out). Its function is as follows. NDH-1 shuttles electrons from NAD(P)H, via FMN and iron-sulfur (Fe-S) centers, to quinones in the respiratory chain. The immediate electron acceptor for the enzyme in this species is believed to be plastoquinone. Couples the redox reaction to proton translocation (for every two electrons transferred, four hydrogen ions are translocated across the cytoplasmic membrane), and thus conserves the redox energy in a proton gradient. The chain is NAD(P)H-quinone oxidoreductase chain 4 2 from Picosynechococcus sp. (strain ATCC 27264 / PCC 7002 / PR-6) (Agmenellum quadruplicatum).